Consider the following 89-residue polypeptide: Dynein light chain 1, cytoplasmic (89 aa).

It belongs to the dynein light chain family. In terms of assembly, interacts with spn-F. Forms ternary complexes with spn-F and IKKepsilon. As to expression, ubiquitous.

Its subcellular location is the cytoplasm. It localises to the cytoskeleton. Acts as a non-catalytic accessory component of a dynein complex. This chain is Dynein light chain 1, cytoplasmic (ctp), found in Drosophila melanogaster (Fruit fly).